A 289-amino-acid chain; its full sequence is Protease HtpX homolog (289 aa).

The next 2 membrane-spanning stretches (helical) occupy residues 8–28 (LALL…VIGG) and 29–49 (SSGL…SWYQ). Histidine 132 serves as a coordination point for Zn(2+). Glutamate 133 is a catalytic residue. Histidine 136 contacts Zn(2+). Helical transmembrane passes span 151–171 (VAGA…FGGI) and 183–203 (LGVL…QLAI). Glutamate 208 contacts Zn(2+).

Belongs to the peptidase M48B family. Zn(2+) serves as cofactor.

Its subcellular location is the cell inner membrane. This Trichormus variabilis (strain ATCC 29413 / PCC 7937) (Anabaena variabilis) protein is Protease HtpX homolog.